The chain runs to 607 residues: Aspartate--tRNA(Asp/Asn) ligase (607 aa).

Position 168 (E168) interacts with L-aspartate. The interval Q192–K195 is aspartate. R214 provides a ligand contact to L-aspartate. ATP-binding positions include R214–E216 and Q223. H449 provides a ligand contact to L-aspartate. E483 provides a ligand contact to ATP. R490 serves as a coordination point for L-aspartate. G535–R538 contacts ATP. The segment at L578–T607 is disordered. Residues A580–A590 show a composition bias toward basic and acidic residues. The span at R591–T607 shows a compositional bias: low complexity.

This sequence belongs to the class-II aminoacyl-tRNA synthetase family. Type 1 subfamily. Homodimer.

It is found in the cytoplasm. It catalyses the reaction tRNA(Asx) + L-aspartate + ATP = L-aspartyl-tRNA(Asx) + AMP + diphosphate. Functionally, aspartyl-tRNA synthetase with relaxed tRNA specificity since it is able to aspartylate not only its cognate tRNA(Asp) but also tRNA(Asn). Reaction proceeds in two steps: L-aspartate is first activated by ATP to form Asp-AMP and then transferred to the acceptor end of tRNA(Asp/Asn). This is Aspartate--tRNA(Asp/Asn) ligase from Salinispora tropica (strain ATCC BAA-916 / DSM 44818 / JCM 13857 / NBRC 105044 / CNB-440).